The sequence spans 450 residues: tRNA-2-methylthio-N(6)-dimethylallyladenosine synthase (450 aa).

The 117-residue stretch at 3 to 119 folds into the MTTase N-terminal domain; sequence RRYYITTFGC…LGELLEQVWN (117 aa). [4Fe-4S] cluster-binding residues include C12, C48, C82, C154, C158, and C161. One can recognise a Radical SAM core domain in the interval 140-377; that stretch reads RDSTVTAWVN…NHLVAKIAGD (238 aa). A TRAM domain is found at 380 to 444; that stretch reads QRYLGREEVV…AFSLSGVPLA (65 aa).

Belongs to the methylthiotransferase family. MiaB subfamily. As to quaternary structure, monomer. [4Fe-4S] cluster is required as a cofactor.

Its subcellular location is the cytoplasm. The catalysed reaction is N(6)-dimethylallyladenosine(37) in tRNA + (sulfur carrier)-SH + AH2 + 2 S-adenosyl-L-methionine = 2-methylsulfanyl-N(6)-dimethylallyladenosine(37) in tRNA + (sulfur carrier)-H + 5'-deoxyadenosine + L-methionine + A + S-adenosyl-L-homocysteine + 2 H(+). Functionally, catalyzes the methylthiolation of N6-(dimethylallyl)adenosine (i(6)A), leading to the formation of 2-methylthio-N6-(dimethylallyl)adenosine (ms(2)i(6)A) at position 37 in tRNAs that read codons beginning with uridine. In Thermosynechococcus vestitus (strain NIES-2133 / IAM M-273 / BP-1), this protein is tRNA-2-methylthio-N(6)-dimethylallyladenosine synthase.